Reading from the N-terminus, the 149-residue chain is Large ribosomal subunit protein uL30 (149 aa).

This sequence belongs to the universal ribosomal protein uL30 family. As to quaternary structure, part of the 50S ribosomal subunit.

This Methanopyrus kandleri (strain AV19 / DSM 6324 / JCM 9639 / NBRC 100938) protein is Large ribosomal subunit protein uL30.